The primary structure comprises 361 residues: Phosphoserine aminotransferase (361 aa).

Residue Arg43 coordinates L-glutamate. Residues 77 to 78, Trp103, Thr152, Asp172, and Gln195 each bind pyridoxal 5'-phosphate; that span reads AS. Lys196 is modified (N6-(pyridoxal phosphate)lysine). Pyridoxal 5'-phosphate is bound at residue 237–238; that stretch reads NT.

It belongs to the class-V pyridoxal-phosphate-dependent aminotransferase family. SerC subfamily. In terms of assembly, homodimer. Pyridoxal 5'-phosphate serves as cofactor.

It localises to the cytoplasm. It carries out the reaction O-phospho-L-serine + 2-oxoglutarate = 3-phosphooxypyruvate + L-glutamate. The catalysed reaction is 4-(phosphooxy)-L-threonine + 2-oxoglutarate = (R)-3-hydroxy-2-oxo-4-phosphooxybutanoate + L-glutamate. It functions in the pathway amino-acid biosynthesis; L-serine biosynthesis; L-serine from 3-phospho-D-glycerate: step 2/3. It participates in cofactor biosynthesis; pyridoxine 5'-phosphate biosynthesis; pyridoxine 5'-phosphate from D-erythrose 4-phosphate: step 3/5. Functionally, catalyzes the reversible conversion of 3-phosphohydroxypyruvate to phosphoserine and of 3-hydroxy-2-oxo-4-phosphonooxybutanoate to phosphohydroxythreonine. The polypeptide is Phosphoserine aminotransferase (Desulfosudis oleivorans (strain DSM 6200 / JCM 39069 / Hxd3) (Desulfococcus oleovorans)).